A 373-amino-acid chain; its full sequence is Histidinol-phosphate aminotransferase (373 aa).

Lys-230 carries the N6-(pyridoxal phosphate)lysine modification.

It belongs to the class-II pyridoxal-phosphate-dependent aminotransferase family. Histidinol-phosphate aminotransferase subfamily. Homodimer. Pyridoxal 5'-phosphate is required as a cofactor.

The enzyme catalyses L-histidinol phosphate + 2-oxoglutarate = 3-(imidazol-4-yl)-2-oxopropyl phosphate + L-glutamate. It functions in the pathway amino-acid biosynthesis; L-histidine biosynthesis; L-histidine from 5-phospho-alpha-D-ribose 1-diphosphate: step 7/9. The protein is Histidinol-phosphate aminotransferase of Synechococcus sp. (strain ATCC 27144 / PCC 6301 / SAUG 1402/1) (Anacystis nidulans).